Reading from the N-terminus, the 138-residue chain is Thyrotropin subunit beta (138 aa).

The N-terminal stretch at 1-20 (MTATFLMSMIFGLACGQAMS) is a signal peptide. Cystine bridges form between C22/C72, C36/C87, C39/C125, C47/C103, C51/C105, and C108/C115. N43 is a glycosylation site (N-linked (GlcNAc...) asparagine). A propeptide spanning residues 133 to 138 (MVGFSI) is cleaved from the precursor.

It belongs to the glycoprotein hormones subunit beta family. As to quaternary structure, heterodimer of a common alpha chain and a unique beta chain which confers biological specificity to thyrotropin, lutropin, follitropin and gonadotropin.

It is found in the secreted. Indispensable for the control of thyroid structure and metabolism. The chain is Thyrotropin subunit beta (TSHB) from Bos taurus (Bovine).